The sequence spans 274 residues: Siroheme biosynthesis protein MET8 (274 aa).

NAD(+) is bound by residues 23–24 (EV), 43–45 (SPD), and Phe93. Asp141 acts as the Proton acceptor in catalysis.

It belongs to the precorrin-2 dehydrogenase / sirohydrochlorin ferrochelatase family. MET8 subfamily. Homodimer.

The catalysed reaction is precorrin-2 + NAD(+) = sirohydrochlorin + NADH + 2 H(+). It carries out the reaction siroheme + 2 H(+) = sirohydrochlorin + Fe(2+). The protein operates within porphyrin-containing compound metabolism; siroheme biosynthesis; siroheme from sirohydrochlorin: step 1/1. It participates in porphyrin-containing compound metabolism; siroheme biosynthesis; sirohydrochlorin from precorrin-2: step 1/1. Catalyzes the conversion of precorrin-2 into siroheme. This reaction consist of the NAD-dependent oxidation of precorrin-2 into sirohydrochlorin and its subsequent ferrochelation into siroheme. This Saccharomyces cerevisiae (strain ATCC 204508 / S288c) (Baker's yeast) protein is Siroheme biosynthesis protein MET8.